A 624-amino-acid polypeptide reads, in one-letter code: (-)-beta-phellandrene synthase 2, chloroplastic (624 aa).

Residues 1–47 (MALVSVAPLVSMRRSLFSSPYELKSIDKTIPNLVMCRKRMLGRPSIR) constitute a chloroplast transit peptide. The Mg(2+) site is built by D375, D379, and D527. The DDXXD motif motif lies at 375–379 (DDIYD).

Belongs to the terpene synthase family. Tpsd subfamily. The cofactor is Mg(2+). Requires Mn(2+) as cofactor.

It is found in the plastid. The protein localises to the chloroplast. It catalyses the reaction (2E)-geranyl diphosphate = (-)-beta-phellandrene + diphosphate. Its pathway is terpene metabolism; oleoresin biosynthesis. It functions in the pathway secondary metabolite biosynthesis; terpenoid biosynthesis. Functionally, monoterpene synthase (TPS) involved in the biosynthesis of monoterpene natural products included in conifer oleoresin secretions and volatile emissions; these compounds contribute to biotic and abiotic stress defense against herbivores and pathogens. Catalyzes the conversion of (2E)-geranyl diphosphate (GPP) to (-)-beta-phellandrene. In Pinus contorta (Shore pine), this protein is (-)-beta-phellandrene synthase 2, chloroplastic.